Consider the following 249-residue polypeptide: Cell surface glycoprotein CD200 receptor 2 (249 aa).

A signal peptide spans 1-24 (MHALGRTPALTLLIFIYNFVSVYT). The 100-residue stretch at 25 to 124 (IVSVQMGTKA…GNFHKVYDLQ (100 aa)) folds into the Ig-like V-type domain. Residues 25 to 220 (IVSVQMGTKA…TTSTTPSLLT (196 aa)) lie on the Extracellular side of the membrane. The cysteines at positions 38 and 108 are disulfide-linked. N-linked (GlcNAc...) asparagine glycans are attached at residues N73, N138, and N171. The Ig-like C2-type domain occupies 113-208 (PEGNFHKVYD…GNQSLSIELS (96 aa)). C143 and C192 form a disulfide bridge. Residues 221–241 (ILYVKMVLLGIILLKVGFAFF) traverse the membrane as a helical segment. The Cytoplasmic portion of the chain corresponds to 242–249 (QKRNVTRT).

This sequence belongs to the CD200R family. As to expression, expressed in bone marrow, spleen, brain, lung, testis and thymus.

The protein localises to the membrane. In terms of biological role, according to PubMed:15187158 it is a receptor for the CD200 cell surface glycoprotein. According to PubMed:16081818 it is not a receptor for the CD200/OX2 cell surface glycoprotein. Involved in the recruitment or surface expression of the TYROBP receptor. The polypeptide is Cell surface glycoprotein CD200 receptor 2 (Cd200r1l) (Mus musculus (Mouse)).